Reading from the N-terminus, the 506-residue chain is Aldehyde dehydrogenase (506 aa).

218 to 224 (GFGLEAG) contributes to the NAD(+) binding site. Catalysis depends on residues Glu262 and Cys301.

Belongs to the aldehyde dehydrogenase family.

It carries out the reaction an aldehyde + NAD(+) + H2O = a carboxylate + NADH + 2 H(+). In Rhodospirillum rubrum (strain ATCC 11170 / ATH 1.1.1 / DSM 467 / LMG 4362 / NCIMB 8255 / S1), this protein is Aldehyde dehydrogenase.